Consider the following 307-residue polypeptide: Ribonuclease Z (307 aa).

Zn(2+) is bound by residues His-63, His-65, Asp-67, His-68, His-140, Asp-211, and His-269. The active-site Proton acceptor is Asp-67.

Belongs to the RNase Z family. In terms of assembly, homodimer. It depends on Zn(2+) as a cofactor.

It catalyses the reaction Endonucleolytic cleavage of RNA, removing extra 3' nucleotides from tRNA precursor, generating 3' termini of tRNAs. A 3'-hydroxy group is left at the tRNA terminus and a 5'-phosphoryl group is left at the trailer molecule.. In terms of biological role, zinc phosphodiesterase, which displays some tRNA 3'-processing endonuclease activity. Probably involved in tRNA maturation, by removing a 3'-trailer from precursor tRNA. The protein is Ribonuclease Z of Geobacillus kaustophilus (strain HTA426).